The primary structure comprises 550 residues: Membrane protein insertase YidC (550 aa).

A helical transmembrane segment spans residues 6–26 (LIVFIVLSFGLLFVWQEYFAP). Residues 30-59 (PKPVAAAVQPDGTPAPATARPADSPATGKL) are disordered. 4 consecutive transmembrane segments (helical) span residues 360–380 (WGWAIVLLTVLVKAAFYPLSA), 430–450 (LPIVVQIPVFIGLYWALLASV), 472–492 (ILPALMAATMYLQTFLNPPPA), and 504–524 (PLAFSVMFFFFPAGLVLYWLV).

The protein belongs to the OXA1/ALB3/YidC family. Type 1 subfamily. In terms of assembly, interacts with the Sec translocase complex via SecD. Specifically interacts with transmembrane segments of nascent integral membrane proteins during membrane integration.

Its subcellular location is the cell inner membrane. Required for the insertion and/or proper folding and/or complex formation of integral membrane proteins into the membrane. Involved in integration of membrane proteins that insert both dependently and independently of the Sec translocase complex, as well as at least some lipoproteins. Aids folding of multispanning membrane proteins. The polypeptide is Membrane protein insertase YidC (Laribacter hongkongensis (strain HLHK9)).